The following is a 402-amino-acid chain: CCA-adding enzyme (402 aa).

ATP-binding residues include glycine 32 and arginine 35. 2 residues coordinate CTP: glycine 32 and arginine 35. The Mg(2+) site is built by aspartate 45 and aspartate 47. Arginine 116, aspartate 159, arginine 162, arginine 165, and arginine 168 together coordinate ATP. The CTP site is built by arginine 116, aspartate 159, arginine 162, arginine 165, and arginine 168.

This sequence belongs to the tRNA nucleotidyltransferase/poly(A) polymerase family. Bacterial CCA-adding enzyme type 3 subfamily. As to quaternary structure, homodimer. Requires Mg(2+) as cofactor.

The enzyme catalyses a tRNA precursor + 2 CTP + ATP = a tRNA with a 3' CCA end + 3 diphosphate. It carries out the reaction a tRNA with a 3' CCA end + 2 CTP + ATP = a tRNA with a 3' CCACCA end + 3 diphosphate. Functionally, catalyzes the addition and repair of the essential 3'-terminal CCA sequence in tRNAs without using a nucleic acid template. Adds these three nucleotides in the order of C, C, and A to the tRNA nucleotide-73, using CTP and ATP as substrates and producing inorganic pyrophosphate. tRNA 3'-terminal CCA addition is required both for tRNA processing and repair. Also involved in tRNA surveillance by mediating tandem CCA addition to generate a CCACCA at the 3' terminus of unstable tRNAs. While stable tRNAs receive only 3'-terminal CCA, unstable tRNAs are marked with CCACCA and rapidly degraded. The protein is CCA-adding enzyme of Streptococcus pyogenes serotype M6 (strain ATCC BAA-946 / MGAS10394).